The following is a 749-amino-acid chain: Transcription factor RFX3 (749 aa).

A DNA-binding region (RFX-type winged-helix) is located at residues His183–Pro258. The segment at Val663–Leu699 is disordered. Over residues Ser674–Ser688 the composition is skewed to acidic residues.

The protein belongs to the RFX family. In terms of assembly, heterodimer; heterodimerizes with RFX1 and RFX2, and RFX6.

It localises to the nucleus. Its function is as follows. Transcription factor required for ciliogenesis and islet cell differentiation during endocrine pancreas development. Essential for the differentiation of nodal monocilia and left-right asymmetry specification during embryogenesis. Required for the biogenesis of motile cilia by governing growth and beating efficiency of motile cells. Also required for ciliated ependymal cell differentiation. Regulates the expression of genes involved in ciliary assembly (DYNC2LI1, FOXJ1 and BBS4) and genes involved in ciliary motility (DNAH11, DNAH9 and DNAH5). Together with RFX6, participates in the differentiation of 4 of the 5 islet cell types during endocrine pancreas development, with the exception of pancreatic PP (polypeptide-producing) cells. Regulates transcription by forming a heterodimer with another RFX protein and binding to the X-box in the promoter of target genes. Represses transcription of MAP1A in non-neuronal cells but not in neuronal cells. The protein is Transcription factor RFX3 (RFX3) of Homo sapiens (Human).